Consider the following 270-residue polypeptide: Neurotrophic factor BDNF precursor form (270 aa).

Positions 1 to 18 are cleaved as a signal peptide; that stretch reads MTILFVTMVISYFSCMRA. Positions 19–151 are excised as a propeptide; sequence APMREIPGVQ…AANMSMRVRR (133 aa). Residue asparagine 144 is glycosylated (N-linked (GlcNAc...) asparagine). 3 disulfide bridges follow: cysteine 164/cysteine 231, cysteine 209/cysteine 260, and cysteine 219/cysteine 262.

This sequence belongs to the NGF-beta family.

It localises to the secreted. Its function is as follows. Promotes the survival of neuronal populations that are all located either in the central nervous system or directly connected to it. The protein is Neurotrophic factor BDNF precursor form (bdnf) of Cyprinus carpio (Common carp).